A 203-amino-acid polypeptide reads, in one-letter code: Abscisic acid receptor PYL5 (203 aa).

The span at 1–18 shows a compositional bias: polar residues; the sequence is MRSPVQLQHGSDATNGFH. The segment at 1-29 is disordered; the sequence is MRSPVQLQHGSDATNGFHTLQPHDQTDGP. Residues 51-201 are START-like; it reads HDVGPDQCCS…NLQSLARSTN (151 aa). Residues lysine 87, 117–122, 144–150, and glutamate 166 each bind abscisate; these read AVSSTE and RLKNYRS. A Gate loop motif is present at residues 113–117; that stretch reads SGLPA. The Latch loop signature appears at 143–145; it reads HRL.

The protein belongs to the PYR/PYL/RCAR abscisic acid intracellular receptor family. Monomer. Homodimer. Binds ABA on one subunit only. Binds to CARs protein in an ABA-independent manner, both at the plasma membrane and in the nucleus. Binds both (-)-ABA and (+)-ABA. Interacts with HAB1, ABI1 and ABI2, and possibly with other PP2Cs.

The protein resides in the cytoplasm. It is found in the nucleus. Its subcellular location is the cell membrane. Receptor for abscisic acid (ABA) required for ABA-mediated responses such as stomatal closure and germination inhibition. Inhibits the activity of group-A protein phosphatases type 2C (PP2Cs) in an ABA-independent manner but more efficiently when activated by ABA. Confers enhanced sensitivity to ABA. Can be activated by both (-)-ABA and (+)-ABA. The polypeptide is Abscisic acid receptor PYL5 (PYL5) (Arabidopsis thaliana (Mouse-ear cress)).